The following is a 244-amino-acid chain: Ribonuclease PH (244 aa).

Phosphate contacts are provided by residues Arg87 and 125–127 (GTR).

Belongs to the RNase PH family. As to quaternary structure, homohexameric ring arranged as a trimer of dimers.

The enzyme catalyses tRNA(n+1) + phosphate = tRNA(n) + a ribonucleoside 5'-diphosphate. Its function is as follows. Phosphorolytic 3'-5' exoribonuclease that plays an important role in tRNA 3'-end maturation. Removes nucleotide residues following the 3'-CCA terminus of tRNAs; can also add nucleotides to the ends of RNA molecules by using nucleoside diphosphates as substrates, but this may not be physiologically important. Probably plays a role in initiation of 16S rRNA degradation (leading to ribosome degradation) during starvation. The protein is Ribonuclease PH of Synechococcus sp. (strain JA-2-3B'a(2-13)) (Cyanobacteria bacterium Yellowstone B-Prime).